The sequence spans 144 residues: Superoxide dismutase [Mn] 1 (144 aa).

Mn(2+) is bound by residues histidine 42, aspartate 124, and histidine 128.

This sequence belongs to the iron/manganese superoxide dismutase family. Requires Mn(2+) as cofactor.

The enzyme catalyses 2 superoxide + 2 H(+) = H2O2 + O2. In terms of biological role, destroys superoxide anion radicals which are normally produced within the cells and which are toxic to biological systems. The polypeptide is Superoxide dismutase [Mn] 1 (sod1) (Haloferax mediterranei (Halobacterium mediterranei)).